Here is a 270-residue protein sequence, read N- to C-terminus: tRNA (guanine-N(1)-)-methyltransferase (270 aa).

Residues glycine 119 and 139–144 contribute to the S-adenosyl-L-methionine site; that span reads IGDYVI.

It belongs to the RNA methyltransferase TrmD family. As to quaternary structure, homodimer.

The protein localises to the cytoplasm. The enzyme catalyses guanosine(37) in tRNA + S-adenosyl-L-methionine = N(1)-methylguanosine(37) in tRNA + S-adenosyl-L-homocysteine + H(+). Specifically methylates guanosine-37 in various tRNAs. The protein is tRNA (guanine-N(1)-)-methyltransferase of Nitrosomonas europaea (strain ATCC 19718 / CIP 103999 / KCTC 2705 / NBRC 14298).